The primary structure comprises 287 residues: T-cell ecto-ADP-ribosyltransferase 1 (287 aa).

The N-terminal stretch at 1 to 20 is a signal peptide; sequence MPSNNFKFFLTWWLTQQVTG. Disulfide bonds link Cys41–Cys246, Cys80–Cys201, and Cys141–Cys193. Positions 61–241 constitute a TR mART core domain; that stretch reads EELKLEWEKA…ISLDSPKRKK (181 aa). Positions 98 and 146 each coordinate NAD(+). Residues Arg146 and Ser167 contribute to the active site. Asn171 is a glycosylation site (N-linked (GlcNAc...) asparagine). Position 202 (Ser202) interacts with NAD(+). Residue Glu209 is part of the active site. N-linked (GlcNAc...) asparagine glycosylation is present at Asn256. The GPI-anchor amidated serine moiety is linked to residue Ser258. The propeptide at 259-287 is removed in mature form; sequence SLGSRESCVSLFLVVLLGLLVQQLTLAEP.

Belongs to the Arg-specific ADP-ribosyltransferase family. In terms of processing, it is proposed that in the absence of reducing agents, a disulfide bond is formed between Cys-80 and Cys-201, leading to a conformational change that reduces the catalytic rate of NAD glycohydrolysis. Expressed in spleen, intestine and thymus.

The protein localises to the cell membrane. The enzyme catalyses L-arginyl-[protein] + NAD(+) = N(omega)-(ADP-D-ribosyl)-L-arginyl-[protein] + nicotinamide + H(+). The catalysed reaction is NAD(+) + H2O = ADP-D-ribose + nicotinamide + H(+). Its function is as follows. Has both ADP-ribosyltransferase activity and thiol-dependent NAD(+) glycohydrolase activity. The polypeptide is T-cell ecto-ADP-ribosyltransferase 1 (Art2a) (Mus musculus (Mouse)).